The sequence spans 240 residues: Probable transcriptional regulatory protein HPAG1_0159 (240 aa).

Belongs to the TACO1 family.

It is found in the cytoplasm. In Helicobacter pylori (strain HPAG1), this protein is Probable transcriptional regulatory protein HPAG1_0159.